A 122-amino-acid chain; its full sequence is MICOS complex subunit MIC13 homolog QIL1 (122 aa).

The helical transmembrane segment at 9–25 threads the bilayer; it reads GGLVAATVYYTQKVGIW.

It belongs to the MICOS complex subunit Mic13 family. Component of the mitochondrial contact site and cristae organizing system (MICOS) complex.

The protein resides in the mitochondrion inner membrane. In terms of biological role, component of the MICOS complex, a large protein complex of the mitochondrial inner membrane that plays crucial roles in the maintenance of crista junctions, inner membrane architecture, and formation of contact sites to the outer membrane. This chain is MICOS complex subunit MIC13 homolog QIL1, found in Drosophila melanogaster (Fruit fly).